A 215-amino-acid chain; its full sequence is 3-demethoxyubiquinol 3-hydroxylase (215 aa).

The Fe cation site is built by E64, E94, H97, E146, E178, and H181.

Belongs to the COQ7 family. Fe cation is required as a cofactor.

The protein localises to the cell membrane. It catalyses the reaction a 5-methoxy-2-methyl-3-(all-trans-polyprenyl)benzene-1,4-diol + AH2 + O2 = a 3-demethylubiquinol + A + H2O. Its pathway is cofactor biosynthesis; ubiquinone biosynthesis. Functionally, catalyzes the hydroxylation of 2-nonaprenyl-3-methyl-6-methoxy-1,4-benzoquinol during ubiquinone biosynthesis. The polypeptide is 3-demethoxyubiquinol 3-hydroxylase (Pseudomonas aeruginosa (strain LESB58)).